Reading from the N-terminus, the 250-residue chain is 3-deoxy-manno-octulosonate cytidylyltransferase (250 aa).

Belongs to the KdsB family.

It localises to the cytoplasm. The catalysed reaction is 3-deoxy-alpha-D-manno-oct-2-ulosonate + CTP = CMP-3-deoxy-beta-D-manno-octulosonate + diphosphate. It functions in the pathway nucleotide-sugar biosynthesis; CMP-3-deoxy-D-manno-octulosonate biosynthesis; CMP-3-deoxy-D-manno-octulosonate from 3-deoxy-D-manno-octulosonate and CTP: step 1/1. The protein operates within bacterial outer membrane biogenesis; lipopolysaccharide biosynthesis. In terms of biological role, activates KDO (a required 8-carbon sugar) for incorporation into bacterial lipopolysaccharide in Gram-negative bacteria. This chain is 3-deoxy-manno-octulosonate cytidylyltransferase, found in Francisella philomiragia subsp. philomiragia (strain ATCC 25017 / CCUG 19701 / FSC 153 / O#319-036).